The chain runs to 233 residues: Large ribosomal subunit protein uL22m (233 aa).

Belongs to the universal ribosomal protein uL22 family. In terms of assembly, component of the mitochondrial ribosome large subunit (39S) which comprises a 16S rRNA and about 50 distinct proteins.

Its subcellular location is the mitochondrion. The polypeptide is Large ribosomal subunit protein uL22m (mRpL22) (Drosophila melanogaster (Fruit fly)).